The following is a 420-amino-acid chain: Anaerobic glycerol-3-phosphate dehydrogenase subunit B (420 aa).

This sequence belongs to the anaerobic G-3-P dehydrogenase subunit B family. In terms of assembly, composed of a catalytic GlpA/B dimer and of membrane bound GlpC. It depends on FMN as a cofactor.

The catalysed reaction is a quinone + sn-glycerol 3-phosphate = dihydroxyacetone phosphate + a quinol. Its pathway is polyol metabolism; glycerol degradation via glycerol kinase pathway; glycerone phosphate from sn-glycerol 3-phosphate (anaerobic route): step 1/1. Its function is as follows. Conversion of glycerol 3-phosphate to dihydroxyacetone. Uses fumarate or nitrate as electron acceptor. The chain is Anaerobic glycerol-3-phosphate dehydrogenase subunit B from Pectobacterium atrosepticum (strain SCRI 1043 / ATCC BAA-672) (Erwinia carotovora subsp. atroseptica).